The following is a 193-amino-acid chain: Orotate phosphoribosyltransferase (193 aa).

Residue 116–124 coordinates 5-phospho-alpha-D-ribose 1-diphosphate; that stretch reads EDVVTTGKS. Orotate contacts are provided by Thr120 and Arg148.

The protein belongs to the purine/pyrimidine phosphoribosyltransferase family. PyrE subfamily. As to quaternary structure, homodimer. Requires Mg(2+) as cofactor.

The catalysed reaction is orotidine 5'-phosphate + diphosphate = orotate + 5-phospho-alpha-D-ribose 1-diphosphate. It participates in pyrimidine metabolism; UMP biosynthesis via de novo pathway; UMP from orotate: step 1/2. In terms of biological role, catalyzes the transfer of a ribosyl phosphate group from 5-phosphoribose 1-diphosphate to orotate, leading to the formation of orotidine monophosphate (OMP). The protein is Orotate phosphoribosyltransferase of Clostridium tetani (strain Massachusetts / E88).